The primary structure comprises 186 residues: Casparian strip membrane protein 3 (186 aa).

The Cytoplasmic portion of the chain corresponds to 1 to 26 (MKGSSEHGETSKAAPLGRGGVSKGVS). The helical transmembrane segment at 27–47 (VLDLILRFIAIIGTLASAIAM) threads the bilayer. Over 48 to 74 (GTTNETLPFFTQFIRFKAQYSDLPTLT) the chain is Extracellular. Asparagine 51 carries N-linked (GlcNAc...) asparagine glycosylation. The helical transmembrane segment at 75–95 (FFVVANSIVCAYLILSLPLSI) threads the bilayer. The Cytoplasmic segment spans residues 96-107 (VHIIRSRAKYSR). A helical transmembrane segment spans residues 108 to 128 (LLLIFLDAAMLALVTAGASAA). Residues 129-161 (AAIVYLAHKGNVRANWLAICQQFDSFCERISGS) lie on the Extracellular side of the membrane. A helical transmembrane segment spans residues 162–182 (LIGSFGAMVMLILLILLSAIA). At 183–186 (LARR) the chain is on the cytoplasmic side.

It belongs to the Casparian strip membrane proteins (CASP) family. Homodimer and heterodimers.

The protein localises to the cell membrane. Regulates membrane-cell wall junctions and localized cell wall deposition. Required for establishment of the Casparian strip membrane domain (CSD) and the subsequent formation of Casparian strips, a cell wall modification of the root endodermis that determines an apoplastic barrier between the intraorganismal apoplasm and the extraorganismal apoplasm and prevents lateral diffusion. The sequence is that of Casparian strip membrane protein 3 from Sorghum bicolor (Sorghum).